We begin with the raw amino-acid sequence, 507 residues long: Protein O-glucosyltransferase 3 (507 aa).

An N-terminal signal peptide occupies residues Met1–Ala20. The Filamin repeat unit spans residues Glu24–Gly134. 2 N-linked (GlcNAc...) asparagine glycosylation sites follow: Asn61 and Asn306. A Prevents secretion from ER motif is present at residues Arg504 to Leu507.

The protein belongs to the KDELC family.

It is found in the endoplasmic reticulum lumen. It carries out the reaction L-seryl-[EGF-like domain protein] + UDP-alpha-D-glucose = 3-O-(beta-D-glucosyl)-L-seryl-[EGF-like domain protein] + UDP + H(+). It catalyses the reaction L-seryl-[EGF-like domain protein] + UDP-alpha-D-xylose = 3-O-(beta-D-xylosyl)-L-seryl-[EGF-like domain protein] + UDP + H(+). The protein operates within protein modification; protein glycosylation. Functionally, protein glucosyltransferase that catalyzes the transfer of glucose from UDP-glucose to a serine residue within the consensus sequence peptide C-X-N-T-X-G-S-F-X-C. Can also catalyze the transfer of xylose from UDP-xylose but less efficiently. Specifically targets extracellular EGF repeats of proteins such as NOTCH1, NOTCH3, FBN1, FBN2 and LTBP1. May regulate the transport of NOTCH1 and NOTCH3 to the plasma membrane and thereby the Notch signaling pathway. The protein is Protein O-glucosyltransferase 3 of Homo sapiens (Human).